The primary structure comprises 355 residues: Uroporphyrinogen decarboxylase (355 aa).

Substrate-binding positions include 27 to 31 (RQAGR), D78, Y155, S210, and H328.

It belongs to the uroporphyrinogen decarboxylase family. In terms of assembly, homodimer.

Its subcellular location is the cytoplasm. The enzyme catalyses uroporphyrinogen III + 4 H(+) = coproporphyrinogen III + 4 CO2. Its pathway is porphyrin-containing compound metabolism; protoporphyrin-IX biosynthesis; coproporphyrinogen-III from 5-aminolevulinate: step 4/4. Catalyzes the decarboxylation of four acetate groups of uroporphyrinogen-III to yield coproporphyrinogen-III. This chain is Uroporphyrinogen decarboxylase, found in Pseudomonas paraeruginosa (strain DSM 24068 / PA7) (Pseudomonas aeruginosa (strain PA7)).